The primary structure comprises 354 residues: GDSL esterase/lipase At5g03820 (354 aa).

A signal peptide spans 1-24; sequence MKMFIIMLMTFSVIACFYAGVGTG. Ser-37 functions as the Nucleophile in the catalytic mechanism. Asn-66, Asn-100, Asn-237, Asn-256, Asn-257, Asn-261, and Asn-321 each carry an N-linked (GlcNAc...) asparagine glycan. Catalysis depends on residues Asp-329 and His-332.

This sequence belongs to the 'GDSL' lipolytic enzyme family.

The protein resides in the secreted. The sequence is that of GDSL esterase/lipase At5g03820 from Arabidopsis thaliana (Mouse-ear cress).